Reading from the N-terminus, the 229-residue chain is Probable U3 small nucleolar RNA-associated protein 11 (229 aa).

Disordered regions lie at residues 1 to 23 (MSSLRNAIQRRAHKERAQPESRK) and 199 to 229 (KKPGRKRKLREDEIENQTSRPVYKWRAQRKR).

This sequence belongs to the UTP11 family. In terms of assembly, component of the ribosomal small subunit (SSU) processome.

Its subcellular location is the nucleus. The protein localises to the nucleolus. Involved in nucleolar processing of pre-18S ribosomal RNA. This Oryza sativa subsp. japonica (Rice) protein is Probable U3 small nucleolar RNA-associated protein 11.